The chain runs to 462 residues: Serine--tRNA ligase, cytoplasmic (462 aa).

246–248 (TSE) provides a ligand contact to L-serine. ATP is bound by residues 279–281 (RRE) and Val295. Residue Glu302 coordinates L-serine. 366–369 (ELVS) contributes to the ATP binding site. Position 404 (Thr404) interacts with L-serine.

The protein belongs to the class-II aminoacyl-tRNA synthetase family. Type-1 seryl-tRNA synthetase subfamily. Homodimer. The tRNA molecule binds across the dimer.

The protein resides in the cytoplasm. The protein localises to the cytosol. The enzyme catalyses tRNA(Ser) + L-serine + ATP = L-seryl-tRNA(Ser) + AMP + diphosphate + H(+). Functionally, catalyzes the attachment of serine to tRNA(Ser) in a two-step reaction: serine is first activated by ATP to form Ser-AMP and then transferred to the acceptor end of tRNA(Ser). The chain is Serine--tRNA ligase, cytoplasmic (SES1) from Candida albicans (strain SC5314 / ATCC MYA-2876) (Yeast).